A 270-amino-acid polypeptide reads, in one-letter code: GTP cyclohydrolase FolE2 (270 aa).

It belongs to the GTP cyclohydrolase IV family.

The catalysed reaction is GTP + H2O = 7,8-dihydroneopterin 3'-triphosphate + formate + H(+). It participates in cofactor biosynthesis; 7,8-dihydroneopterin triphosphate biosynthesis; 7,8-dihydroneopterin triphosphate from GTP: step 1/1. Converts GTP to 7,8-dihydroneopterin triphosphate. This chain is GTP cyclohydrolase FolE2, found in Cupriavidus pinatubonensis (strain JMP 134 / LMG 1197) (Cupriavidus necator (strain JMP 134)).